The primary structure comprises 165 residues: NADH-quinone oxidoreductase subunit I (165 aa).

2 consecutive 4Fe-4S ferredoxin-type domains span residues 66–98 (HRLT…ITAT) and 109–138 (SKFT…MDTG). [4Fe-4S] cluster is bound by residues Cys78, Cys81, Cys84, Cys88, Cys118, Cys121, Cys124, and Cys128.

It belongs to the complex I 23 kDa subunit family. In terms of assembly, NDH-1 is composed of 14 different subunits. Subunits NuoA, H, J, K, L, M, N constitute the membrane sector of the complex. [4Fe-4S] cluster serves as cofactor.

Its subcellular location is the cell inner membrane. It carries out the reaction a quinone + NADH + 5 H(+)(in) = a quinol + NAD(+) + 4 H(+)(out). Functionally, NDH-1 shuttles electrons from NADH, via FMN and iron-sulfur (Fe-S) centers, to quinones in the respiratory chain. The immediate electron acceptor for the enzyme in this species is believed to be ubiquinone. Couples the redox reaction to proton translocation (for every two electrons transferred, four hydrogen ions are translocated across the cytoplasmic membrane), and thus conserves the redox energy in a proton gradient. This chain is NADH-quinone oxidoreductase subunit I, found in Campylobacter fetus subsp. fetus (strain 82-40).